A 292-amino-acid polypeptide reads, in one-letter code: Tissue factor (292 aa).

The signal sequence occupies residues 1–32; the sequence is MAPPTRLQVPRPGTAVPYTVLLGWLLAQVARA. The Extracellular portion of the chain corresponds to 33–250; that stretch reads ADTTGRAYNL…SREQGRAREM (218 aa). Fibronectin type-III domains follow at residues 35–126 and 148–240; these read TTGR…PFRN and QVGT…TECT. Asparagine 41 carries an N-linked (GlcNAc...) asparagine glycan. 2 short sequence motifs (WKS motif) span residues 44-46 and 75-77; these read WKS. Cysteine 79 and cysteine 87 are joined by a disulfide. Asparagine 114, asparagine 154, asparagine 167, and asparagine 182 each carry an N-linked (GlcNAc...) asparagine glycan. Cysteine 216 and cysteine 239 are disulfide-bonded. Residues 251–271 traverse the membrane as a helical segment; that stretch reads FFIIGAVVVVALLIIVLSVTV. The Cytoplasmic segment spans residues 272-292; the sequence is YKCRKARAGPSGKESSPLNIA. The S-palmitoyl cysteine moiety is linked to residue cysteine 274.

It belongs to the tissue factor family. As to quaternary structure, interacts with HSPE; the interaction, inhibited by heparin, promotes the generation of activated factor X and activates coagulation in the presence of activated factor VII. Brain, heart.

The protein resides in the membrane. In terms of biological role, initiates blood coagulation by forming a complex with circulating factor VII or VIIa. The [TF:VIIa] complex activates factors IX or X by specific limited proteolysis. TF plays a role in normal hemostasis by initiating the cell-surface assembly and propagation of the coagulation protease cascade. This chain is Tissue factor (F3), found in Oryctolagus cuniculus (Rabbit).